Reading from the N-terminus, the 532-residue chain is ATP synthase subunit alpha (532 aa).

Residue 171–178 coordinates ATP; sequence GDRQTGKT.

The protein belongs to the ATPase alpha/beta chains family. In terms of assembly, F-type ATPases have 2 components, CF(1) - the catalytic core - and CF(0) - the membrane proton channel. CF(1) has five subunits: alpha(3), beta(3), gamma(1), delta(1), epsilon(1). CF(0) has three main subunits: a(1), b(2) and c(9-12). The alpha and beta chains form an alternating ring which encloses part of the gamma chain. CF(1) is attached to CF(0) by a central stalk formed by the gamma and epsilon chains, while a peripheral stalk is formed by the delta and b chains.

It localises to the cell membrane. It catalyses the reaction ATP + H2O + 4 H(+)(in) = ADP + phosphate + 5 H(+)(out). Its function is as follows. Produces ATP from ADP in the presence of a proton gradient across the membrane. The alpha chain is a regulatory subunit. The sequence is that of ATP synthase subunit alpha from Amoebophilus asiaticus (strain 5a2).